The sequence spans 156 residues: Phosphopantetheine adenylyltransferase (156 aa).

A substrate-binding site is contributed by Thr-9. ATP contacts are provided by residues 9–10 and His-17; that span reads TF. Substrate contacts are provided by Lys-41, Leu-73, and Arg-87. Residues 88–90, Glu-98, and 123–129 each bind ATP; these read GVR and WVFVSST.

Belongs to the bacterial CoaD family. Homohexamer. The cofactor is Mg(2+).

It is found in the cytoplasm. The enzyme catalyses (R)-4'-phosphopantetheine + ATP + H(+) = 3'-dephospho-CoA + diphosphate. The protein operates within cofactor biosynthesis; coenzyme A biosynthesis; CoA from (R)-pantothenate: step 4/5. In terms of biological role, reversibly transfers an adenylyl group from ATP to 4'-phosphopantetheine, yielding dephospho-CoA (dPCoA) and pyrophosphate. This is Phosphopantetheine adenylyltransferase from Haemophilus influenzae (strain PittEE).